The chain runs to 689 residues: Glycine--tRNA ligase beta subunit (689 aa).

It belongs to the class-II aminoacyl-tRNA synthetase family. Tetramer of two alpha and two beta subunits.

The protein resides in the cytoplasm. It catalyses the reaction tRNA(Gly) + glycine + ATP = glycyl-tRNA(Gly) + AMP + diphosphate. The protein is Glycine--tRNA ligase beta subunit of Shewanella sp. (strain W3-18-1).